A 457-amino-acid chain; its full sequence is Putative zinc finger CCCH domain-containing protein 21 (457 aa).

4 disordered regions span residues 51–73 (PTSS…ARAS), 102–130 (LESP…EKLL), 195–221 (TSPS…ERER), and 280–329 (RKQA…RLRV). Positions 57-66 (DGGGGGGGGY) are enriched in gly residues. Residues 215 to 276 (ASAEREREVR…HLSLLLEELE (62 aa)) are a coiled coil. 2 C3H1-type zinc fingers span residues 382 to 409 (AAKT…HGLQ) and 419 to 447 (RYKT…HSPL).

The chain is Putative zinc finger CCCH domain-containing protein 21 from Oryza sativa subsp. japonica (Rice).